The following is a 510-amino-acid chain: Secreted RxLR effector protein 24 (510 aa).

An N-terminal signal peptide occupies residues 1–18; that stretch reads MRGAFYVAIALLGSHTAA. A RxLR-dEER motif is present at residues 47–68; sequence RVLRERRDSKDKLTVHAGAEER.

This sequence belongs to the RxLR effector family.

The protein localises to the secreted. The protein resides in the host nucleus. In terms of biological role, secreted effector that acts as an elicitor that induces cell death in host plant cells. The chain is Secreted RxLR effector protein 24 from Plasmopara viticola (Downy mildew of grapevine).